Reading from the N-terminus, the 248-residue chain is 2,3-bisphosphoglycerate-dependent phosphoglycerate mutase (248 aa).

Residues 8–15 (RHGESLWN), 21–22 (TG), Arg60, 87–90 (EKHY), Lys98, 114–115 (RR), and 183–184 (GN) contribute to the substrate site. Catalysis depends on His9, which acts as the Tele-phosphohistidine intermediate. The active-site Proton donor/acceptor is Glu87.

The protein belongs to the phosphoglycerate mutase family. BPG-dependent PGAM subfamily.

It catalyses the reaction (2R)-2-phosphoglycerate = (2R)-3-phosphoglycerate. Its pathway is carbohydrate degradation; glycolysis; pyruvate from D-glyceraldehyde 3-phosphate: step 3/5. In terms of biological role, catalyzes the interconversion of 2-phosphoglycerate and 3-phosphoglycerate. The chain is 2,3-bisphosphoglycerate-dependent phosphoglycerate mutase from Porphyromonas gingivalis (strain ATCC 33277 / DSM 20709 / CIP 103683 / JCM 12257 / NCTC 11834 / 2561).